The primary structure comprises 271 residues: L-aspartate dehydrogenase (271 aa).

Positions 124 and 192 each coordinate NAD(+). The active site involves His222.

It belongs to the L-aspartate dehydrogenase family.

It carries out the reaction L-aspartate + NADP(+) + H2O = oxaloacetate + NH4(+) + NADPH + H(+). It catalyses the reaction L-aspartate + NAD(+) + H2O = oxaloacetate + NH4(+) + NADH + H(+). It functions in the pathway cofactor biosynthesis; NAD(+) biosynthesis; iminoaspartate from L-aspartate (dehydrogenase route): step 1/1. Functionally, specifically catalyzes the NAD or NADP-dependent dehydrogenation of L-aspartate to iminoaspartate. In Methanosarcina mazei (strain ATCC BAA-159 / DSM 3647 / Goe1 / Go1 / JCM 11833 / OCM 88) (Methanosarcina frisia), this protein is L-aspartate dehydrogenase.